The chain runs to 78 residues: Small ribosomal subunit protein bS16c (78 aa).

This sequence belongs to the bacterial ribosomal protein bS16 family.

It localises to the plastid. The protein localises to the chloroplast. The polypeptide is Small ribosomal subunit protein bS16c (Amborella trichopoda).